The chain runs to 708 residues: Kin of IRRE-like protein 2 (708 aa).

The N-terminal stretch at 1-20 (MLRMRVPALLVLLFCFRGRA) is a signal peptide. The Extracellular segment spans residues 21–510 (GPSPHFLQQP…GRRDLLPTVR (490 aa)). Ig-like C2-type domains are found at residues 24–118 (PHFL…AQLH), 123–222 (PEAP…ITLS), 227–307 (PEVT…TALD), 312–394 (PILQ…ARLT), and 398–501 (PPVV…ASLG). Cys-45 and Cys-103 form a disulfide bridge. An N-linked (GlcNAc...) asparagine glycan is attached at Asn-143. 2 disulfides stabilise this stretch: Cys-146–Cys-204 and Cys-248–Cys-291. The short motif at 149–151 (RGD) is the Cell attachment site element. An N-linked (GlcNAc...) asparagine glycan is attached at Asn-301. 2 disulfides stabilise this stretch: Cys-333–Cys-375 and Cys-419–Cys-485. N-linked (GlcNAc...) asparagine glycosylation is present at Asn-484. A helical membrane pass occupies residues 511 to 531 (IVAGVAAATTTLLMVITGVAL). Topologically, residues 532 to 708 (CCWRHSKASA…PSHPRLQTHV (177 aa)) are cytoplasmic. The tract at residues 545 to 601 (EQKNLMRIPGSSDGSSSRGPEEEETGSREDRGPIVHTDHSDLVLEEEGTLETKDPTN) is disordered. Residues 553–562 (PGSSDGSSSR) are compositionally biased toward low complexity. The segment covering 569-586 (TGSREDRGPIVHTDHSDL) has biased composition (basic and acidic residues). Ser-571 carries the post-translational modification Phosphoserine. Tyr-603, Tyr-604, and Tyr-661 each carry phosphotyrosine. Residues 684–708 (LAPGTPPFPYAAFPTPSHPRLQTHV) form a disordered region.

This sequence belongs to the immunoglobulin superfamily. Homodimer. Interacts with NPHS2/podocin (via the C-terminus). Interacts with NPHS1 (via the Ig-like domains). Interacts with FYN. In terms of processing, N-glycosylated. The extracellular domain is cleaved leading to the generation of a soluble fragment and a membrane-bound C-terminal fragment, which is further cleaved by gamma-secretase. As to expression, highly expressed in beta-cells of the pancreatic islets.

It localises to the cell membrane. May regulate basal insulin secretion. The polypeptide is Kin of IRRE-like protein 2 (KIRREL2) (Homo sapiens (Human)).